We begin with the raw amino-acid sequence, 379 residues long: Transcription termination factor 1a, mitochondrial (379 aa).

The N-terminal 37 residues, 1 to 37 (MASRNIWCVRRNFLFDLRDWMLQYSAEVFLKSISFRP), are a transit peptide targeting the mitochondrion. Interaction with DNA stretches follow at residues 151-152 (RS), 229-233 (QSTKR), 306-313 (SEKKFNDK), 337-340 (SINT), and 366-373 (SQRRYEAK).

The protein belongs to the mTERF family. As to quaternary structure, monomer. Phosphoprotein with mostly four phosphate groups. While the DNA-binding activity is unaffected by the phosphorylation state, only the phosphorylated form of the protein is active for termination activity. Functioning seems to be regulated by phosphorylation. In terms of tissue distribution, predominantly expressed in heart and liver, with extremely low levels in other tissues. Expressed strongly in the heart and at lower levels in brain, liver and kidney.

The protein resides in the mitochondrion. Transcription termination factor. Binds to a 28 bp region within the tRNA(Leu(uur)) gene at a position immediately adjacent to and downstream of the 16S rRNA gene; this region comprises a tridecamer sequence critical for directing accurate termination. Binds DNA along the major grove and promotes DNA bending and partial unwinding. Promotes base flipping. Transcription termination activity appears to be polarized with highest specificity for transcripts initiated on the light strand. This is Transcription termination factor 1a, mitochondrial (Mterf1a) from Mus musculus (Mouse).